A 560-amino-acid polypeptide reads, in one-letter code: MEPKRKSGSLAKHDLPQFYLLIMLYLAQGIPVGLAFGTVPFLLKSLAKETSFTSLGIFSMATYPYSLKIIWSPIVDSLYNKRIGRRRSWIIPVQFVSGFVLWALGWCISQGIIFDGVDDAFHNRGNGTLHSVSIKNLTWWFGLLVFLCATQDIAVDGWALTILSKESLSYASTAQTIGLNIGYFMSFTIFLSLNSSDFANKYFRNIPLDHGFISLGGYMKFSGMLYIVITIYIIFCTKEKPYVEYLPKVEPINTSDGGSKPISIEYDDGDVVSTQNTSSIKYIYRCFIKVLKLKSVRSLAFIHMISKFAFQCNEAATNLKLLEQGFKREDLAVTVLIDLPFEIIFGYYVVKWSSDKDPMIRDNRRLRNSTGTNKVIKFLVGDAGVLTPWLWGFLGRLAAAVLGSYVVKQFPKDGEISTGYFCLVIFQHLLGSFMNTVQFIGISAFHTRVADPVLGGTYMTLLNTLSNFGGTWPRLIIMSMINYFTVYQCTIPGTNKVYVTHGGSMQACTELLNGTVTILRDGYYITNLICIVVGLFLYFGYLKRKILHLQSLPISSWRCT.

The Cytoplasmic portion of the chain corresponds to 1 to 17; the sequence is MEPKRKSGSLAKHDLPQ. A helical transmembrane segment spans residues 18-38; the sequence is FYLLIMLYLAQGIPVGLAFGT. Residues 39–54 are Extracellular-facing; sequence VPFLLKSLAKETSFTS. A helical membrane pass occupies residues 55 to 75; the sequence is LGIFSMATYPYSLKIIWSPIV. At 76–88 the chain is on the cytoplasmic side; the sequence is DSLYNKRIGRRRS. The helical transmembrane segment at 89–109 threads the bilayer; that stretch reads WIIPVQFVSGFVLWALGWCIS. Residues 110–139 lie on the Extracellular side of the membrane; the sequence is QGIIFDGVDDAFHNRGNGTLHSVSIKNLTW. Residues 140 to 160 form a helical membrane-spanning segment; it reads WFGLLVFLCATQDIAVDGWAL. Over 161-172 the chain is Cytoplasmic; it reads TILSKESLSYAS. Residues 173-193 traverse the membrane as a helical segment; the sequence is TAQTIGLNIGYFMSFTIFLSL. Topologically, residues 194-214 are extracellular; sequence NSSDFANKYFRNIPLDHGFIS. A helical transmembrane segment spans residues 215–235; the sequence is LGGYMKFSGMLYIVITIYIIF. Residues 236-329 are Cytoplasmic-facing; that stretch reads CTKEKPYVEY…KLLEQGFKRE (94 aa). The helical transmembrane segment at 330-350 threads the bilayer; that stretch reads DLAVTVLIDLPFEIIFGYYVV. At 351–374 the chain is on the extracellular side; it reads KWSSDKDPMIRDNRRLRNSTGTNK. Residues 375–395 form a helical membrane-spanning segment; that stretch reads VIKFLVGDAGVLTPWLWGFLG. Residues 396 to 421 lie on the Cytoplasmic side of the membrane; the sequence is RLAAAVLGSYVVKQFPKDGEISTGYF. Residues 422-442 traverse the membrane as a helical segment; it reads CLVIFQHLLGSFMNTVQFIGI. The Extracellular segment spans residues 443-521; the sequence is SAFHTRVADP…LNGTVTILRD (79 aa). Residues 522-542 traverse the membrane as a helical segment; sequence GYYITNLICIVVGLFLYFGYL. Residues 543–560 lie on the Cytoplasmic side of the membrane; that stretch reads KRKILHLQSLPISSWRCT.

It localises to the membrane. This is an uncharacterized protein from Saccharomyces cerevisiae (strain ATCC 204508 / S288c) (Baker's yeast).